The sequence spans 488 residues: Aspartyl/glutamyl-tRNA(Asn/Gln) amidotransferase subunit B (488 aa).

Belongs to the GatB/GatE family. GatB subfamily. Heterotrimer of A, B and C subunits.

It catalyses the reaction L-glutamyl-tRNA(Gln) + L-glutamine + ATP + H2O = L-glutaminyl-tRNA(Gln) + L-glutamate + ADP + phosphate + H(+). The enzyme catalyses L-aspartyl-tRNA(Asn) + L-glutamine + ATP + H2O = L-asparaginyl-tRNA(Asn) + L-glutamate + ADP + phosphate + 2 H(+). Allows the formation of correctly charged Asn-tRNA(Asn) or Gln-tRNA(Gln) through the transamidation of misacylated Asp-tRNA(Asn) or Glu-tRNA(Gln) in organisms which lack either or both of asparaginyl-tRNA or glutaminyl-tRNA synthetases. The reaction takes place in the presence of glutamine and ATP through an activated phospho-Asp-tRNA(Asn) or phospho-Glu-tRNA(Gln). The polypeptide is Aspartyl/glutamyl-tRNA(Asn/Gln) amidotransferase subunit B (Chlamydia trachomatis serovar A (strain ATCC VR-571B / DSM 19440 / HAR-13)).